The primary structure comprises 712 residues: DNA topoisomerase 3 (712 aa).

One can recognise a Toprim domain in the interval 2 to 135 (KSLIIAEKPS…TKRLWISSVT (134 aa)). E8 and D104 together coordinate Mg(2+). Residues 152–581 (FNNLYHAALA…EMKAFTNQVV (430 aa)) form the Topo IA-type catalytic domain. The tract at residues 186 to 191 (SLGRVQ) is interaction with DNA. The active-site O-(5'-phospho-DNA)-tyrosine intermediate is the Y305.

This sequence belongs to the type IA topoisomerase family. It depends on Mg(2+) as a cofactor.

It catalyses the reaction ATP-independent breakage of single-stranded DNA, followed by passage and rejoining.. Its function is as follows. Releases the supercoiling and torsional tension of DNA, which is introduced during the DNA replication and transcription, by transiently cleaving and rejoining one strand of the DNA duplex. Introduces a single-strand break via transesterification at a target site in duplex DNA. The scissile phosphodiester is attacked by the catalytic tyrosine of the enzyme, resulting in the formation of a DNA-(5'-phosphotyrosyl)-enzyme intermediate and the expulsion of a 3'-OH DNA strand. The free DNA strand then undergoes passage around the unbroken strand, thus removing DNA supercoils. Finally, in the religation step, the DNA 3'-OH attacks the covalent intermediate to expel the active-site tyrosine and restore the DNA phosphodiester backbone. This Staphylococcus saprophyticus subsp. saprophyticus (strain ATCC 15305 / DSM 20229 / NCIMB 8711 / NCTC 7292 / S-41) protein is DNA topoisomerase 3.